We begin with the raw amino-acid sequence, 359 residues long: D-alanine--D-alanine ligase (359 aa).

The region spanning 141-346 (KRIFKEAGLP…YSTLLDELIN (206 aa)) is the ATP-grasp domain. Residue 172–227 (IEHLGYPCFVKPANLGSSVGITKVHNEEELPGALKLAAKYDRKLLIERGIDAREIE) participates in ATP binding. 3 residues coordinate Mg(2+): Asp-299, Glu-313, and Asn-315.

This sequence belongs to the D-alanine--D-alanine ligase family. Mg(2+) is required as a cofactor. The cofactor is Mn(2+).

Its subcellular location is the cytoplasm. The enzyme catalyses 2 D-alanine + ATP = D-alanyl-D-alanine + ADP + phosphate + H(+). It participates in cell wall biogenesis; peptidoglycan biosynthesis. Its function is as follows. Cell wall formation. The polypeptide is D-alanine--D-alanine ligase (Thermoanaerobacter pseudethanolicus (strain ATCC 33223 / 39E) (Clostridium thermohydrosulfuricum)).